Consider the following 297-residue polypeptide: Protease HtpX homolog (297 aa).

Transmembrane regions (helical) follow at residues 14-34 and 39-59; these read IFLI…AGYL and YQFG…SMIF. A Zn(2+)-binding site is contributed by His-143. Residue Glu-144 is part of the active site. Residue His-147 participates in Zn(2+) binding. 2 helical membrane-spanning segments follow: residues 153–173 and 196–216; these read IRIS…ASMG and IVFL…ASMV. Zn(2+) is bound at residue Glu-225.

It belongs to the peptidase M48B family. The cofactor is Zn(2+).

It localises to the cell membrane. The protein is Protease HtpX homolog of Streptococcus uberis (strain ATCC BAA-854 / 0140J).